A 196-amino-acid polypeptide reads, in one-letter code: uncharacterized protein (196 aa).

Residues 58–163 (HKFFDAIKDS…IILPNNYHKN (106 aa)) enclose the Bro-N domain.

This is an uncharacterized protein from Acanthamoeba polyphaga mimivirus (APMV).